The following is a 433-amino-acid chain: Protein translocase subunit SecY (433 aa).

Helical transmembrane passes span 17–37, 71–91, 117–137, 141–161, 184–204, 212–232, 268–288, 310–330, 366–386, and 388–408; these read IVFT…PIPG, IFAL…LMSV, LTVL…ESIV, GPVV…TLVV, LIIF…MFEL, PLIA…IIFF, GVIP…LANF, YILL…AIVF, LTVI…LLMN, and YVIS…VVLD.

This sequence belongs to the SecY/SEC61-alpha family. Component of the Sec protein translocase complex. Heterotrimer consisting of SecY, SecE and SecG subunits. The heterotrimers can form oligomers, although 1 heterotrimer is thought to be able to translocate proteins. Interacts with the ribosome. Interacts with SecDF, and other proteins may be involved. Interacts with SecA.

It is found in the cell inner membrane. In terms of biological role, the central subunit of the protein translocation channel SecYEG. Consists of two halves formed by TMs 1-5 and 6-10. These two domains form a lateral gate at the front which open onto the bilayer between TMs 2 and 7, and are clamped together by SecE at the back. The channel is closed by both a pore ring composed of hydrophobic SecY resides and a short helix (helix 2A) on the extracellular side of the membrane which forms a plug. The plug probably moves laterally to allow the channel to open. The ring and the pore may move independently. This Rickettsia conorii (strain ATCC VR-613 / Malish 7) protein is Protein translocase subunit SecY.